The primary structure comprises 87 residues: MEKLTILVLVATVLLAIQVLVQSDGEKPLKRRVKQYAAKRLSALMRGPRQCTPRNQRCEGDAECCPNLVCKCFTRPDCQSGYKCDTS.

The N-terminal stretch at 1-23 is a signal peptide; that stretch reads MEKLTILVLVATVLLAIQVLVQS. A propeptide spanning residues 24-49 is cleaved from the precursor; it reads DGEKPLKRRVKQYAAKRLSALMRGPR. Gln-50 bears the Pyrrolidone carboxylic acid mark.

Belongs to the conotoxin O2 superfamily. In terms of processing, contains 4 disulfide bonds. As to expression, expressed by the venom duct.

Its subcellular location is the secreted. The chain is Conotoxin Bt15a from Conus betulinus (Beech cone).